Here is a 147-residue protein sequence, read N- to C-terminus: Spermidine export protein MdtJ (147 aa).

4 consecutive transmembrane segments (helical) span residues 1-21, 31-51, 54-74, and 81-101; these read MIYW…TLSM, TGHV…SLAV, VALG…ITIF, and ETLS…ILLV. Residues 105–117 show a composition bias toward basic residues; sequence TRKPKQPNRHRGN. The disordered stretch occupies residues 105–147; the sequence is TRKPKQPNRHRGNRPPSVQGLKTQTTGHHKGVAVESGEHHAAA.

Belongs to the drug/metabolite transporter (DMT) superfamily. Small multidrug resistance (SMR) (TC 2.A.7.1) family. MdtJ subfamily. Forms a complex with MdtI.

The protein resides in the cell inner membrane. Functionally, catalyzes the excretion of spermidine. The polypeptide is Spermidine export protein MdtJ (Yersinia pseudotuberculosis serotype IB (strain PB1/+)).